The primary structure comprises 375 residues: Cell division protein ZapE (375 aa).

Position 78 to 85 (Gly-78 to Thr-85) interacts with ATP.

This sequence belongs to the AFG1 ATPase family. ZapE subfamily. Interacts with FtsZ.

The protein resides in the cytoplasm. Its function is as follows. Reduces the stability of FtsZ polymers in the presence of ATP. This is Cell division protein ZapE from Escherichia coli O157:H7.